Reading from the N-terminus, the 430-residue chain is Adenylosuccinate synthetase (430 aa).

Residues 12–18 and 40–42 each bind GTP; these read GDEGKGK and GHT. The active-site Proton acceptor is Asp13. Mg(2+) contacts are provided by Asp13 and Gly40. Residues 13-16, 38-41, Thr129, Arg143, Gln223, Thr238, and Arg302 each bind IMP; these read DEGK and NAGH. His41 (proton donor) is an active-site residue. Residue 298 to 304 coordinates substrate; the sequence is TTTGRPR. GTP contacts are provided by residues Arg304, 330-332, and 412-414; these read KLD and SVG.

Belongs to the adenylosuccinate synthetase family. In terms of assembly, homodimer. It depends on Mg(2+) as a cofactor.

The protein resides in the cytoplasm. The enzyme catalyses IMP + L-aspartate + GTP = N(6)-(1,2-dicarboxyethyl)-AMP + GDP + phosphate + 2 H(+). It participates in purine metabolism; AMP biosynthesis via de novo pathway; AMP from IMP: step 1/2. Its function is as follows. Plays an important role in the de novo pathway of purine nucleotide biosynthesis. Catalyzes the first committed step in the biosynthesis of AMP from IMP. This is Adenylosuccinate synthetase from Desulforudis audaxviator (strain MP104C).